Here is a 497-residue protein sequence, read N- to C-terminus: MAKYIMAFDQGTTSSRAIIFDHSGKIVASQNQEFKQIYPKAGWVEHDPMEIWGTQIGVAKGVIEKAGINPEDIAAIGITNQRETTVVWDKNTGKPIYNAIVWQCRRTAPICDELKNKGFDKKIREKTGLVVDAYFSGTKIKWILDNVEGAREKAEKGELLFGNIDTWLIWNLTRGKVHVTDYSNASRTMLFNIHELKWDKEILEELNVPEQMLPEVKPSSYVYGYTDKSIFGVEIPIAGDAGDQQAALFGQACFKPGMAKNTYGTGCFMLMNTGEKAVPSNTGLLTTIAWGIDGKVEYALEGSIFIAGAAIQWLRDELRIIDNSPQSEEYALKVEDTNGVYVVPAFVGLGAPYWDMYARGTIVGLTRGAKREHIIRATLESIAYQTRDVLEAMQEDSGIKLQALKIDGGASANNFLMQFQSDILGVPVDRPQVIETTALGASYLAGLAVGFWNSKEEIEKNWNVDKHFEPAMDNEKREKLYKGWKKAVERAMKWAEE.

Threonine 12 serves as a coordination point for ADP. Positions 12, 13, and 14 each coordinate ATP. Threonine 12 contacts sn-glycerol 3-phosphate. Arginine 16 provides a ligand contact to ADP. Arginine 82, glutamate 83, tyrosine 134, and aspartate 243 together coordinate sn-glycerol 3-phosphate. Arginine 82, glutamate 83, tyrosine 134, aspartate 243, and glutamine 244 together coordinate glycerol. ADP is bound by residues threonine 265 and glycine 308. ATP contacts are provided by threonine 265, glycine 308, glutamine 312, and glycine 409. The ADP site is built by glycine 409 and asparagine 413.

This sequence belongs to the FGGY kinase family. In terms of assembly, homotetramer and homodimer (in equilibrium).

The catalysed reaction is glycerol + ATP = sn-glycerol 3-phosphate + ADP + H(+). It functions in the pathway polyol metabolism; glycerol degradation via glycerol kinase pathway; sn-glycerol 3-phosphate from glycerol: step 1/1. Its activity is regulated as follows. Activated by phosphorylation and inhibited by fructose 1,6-bisphosphate (FBP). Its function is as follows. Key enzyme in the regulation of glycerol uptake and metabolism. Catalyzes the phosphorylation of glycerol to yield sn-glycerol 3-phosphate. The chain is Glycerol kinase from Thermoanaerobacter sp. (strain X514).